Here is a 518-residue protein sequence, read N- to C-terminus: 12S seed storage globulin 2 (518 aa).

The first 24 residues, 1–24 (MATTRFPSLLFYSYIFLLCNGSMA), serve as a signal peptide directing secretion. 2 disulfide bridges follow: Cys45–Cys78 and Cys121–Cys324. In terms of domain architecture, Cupin type-1 1 spans 50-240 (LQAFEPLRQV…ALGISQQVAQ (191 aa)). The interval 280–311 (IQSQEEQSTQYQVGQSPQYQEGQSTQYQPGQS) is disordered. Residues 330–479 (QNIENPKRAD…AYRISRQEAQ (150 aa)) form the Cupin type-1 2 domain. The disordered stretch occupies residues 482 to 518 (KNNRGEEFDAFTPKFTQTGSQSYQDEGESSSTEKASE). Polar residues predominate over residues 495–518 (KFTQTGSQSYQDEGESSSTEKASE).

Belongs to the 11S seed storage protein (globulins) family. Hexamer; each subunit is composed of an acidic and a basic chain derived from a single precursor and linked by a disulfide bond.

In terms of biological role, this is a seed storage protein. This chain is 12S seed storage globulin 2, found in Avena sativa (Oat).